The chain runs to 346 residues: MQLANNKWRVFGTGWLIDWKKPKRTHNLSEPFYLYLATNLHIAVALSNPKDYAPFNKASIGNSLTTVFCLGKYINPQLFKLRTDVSNAFVSIQTSTIPKTAFVARDFVPLQNRGNQWVAPVRASEDDPALAKSYLDFAIIEVPLFLHNQMDKQIYDHFMRPAINTYERLGNSVGIFAYQPMASFKRDSYFALGYPQVESNIAALNLNQTEVKPTRPEDVAQVTFKEPWSVDHHREIPTLTTNQLTTIKTKHFSGSKLSWPFDHTKSFKIKNKWLGQNYQMYGHGLGIDQVNLRKGTSSSLVINQKRQIVGIYFATVITNPKKAVRNDVGLVQMLRFQGEGNSLNPN.

It belongs to the MG067/MG068/MG395 family.

This is an uncharacterized protein from Mycoplasma pneumoniae (strain ATCC 29342 / M129 / Subtype 1) (Mycoplasmoides pneumoniae).